A 358-amino-acid polypeptide reads, in one-letter code: Peptide chain release factor 1 (358 aa).

Q233 is modified (N5-methylglutamine).

Belongs to the prokaryotic/mitochondrial release factor family. Methylated by PrmC. Methylation increases the termination efficiency of RF1.

It is found in the cytoplasm. Peptide chain release factor 1 directs the termination of translation in response to the peptide chain termination codons UAG and UAA. The chain is Peptide chain release factor 1 from Flavobacterium johnsoniae (strain ATCC 17061 / DSM 2064 / JCM 8514 / BCRC 14874 / CCUG 350202 / NBRC 14942 / NCIMB 11054 / UW101) (Cytophaga johnsonae).